The following is a 350-amino-acid chain: Hydroxymethylglutaryl-CoA synthase (350 aa).

The active-site Proton donor/acceptor is the Glu83. Residue Cys115 is the Acyl-thioester intermediate of the active site. Residues Cys115 and Thr156 each contribute to the (3S)-3-hydroxy-3-methylglutaryl-CoA site. Arg204 lines the CoA pocket. Positions 206 and 239 each coordinate (3S)-3-hydroxy-3-methylglutaryl-CoA. His239 functions as the Proton donor/acceptor in the catalytic mechanism. Position 244 (Lys244) interacts with CoA. Residues Asn271 and Ser301 each coordinate (3S)-3-hydroxy-3-methylglutaryl-CoA.

The protein belongs to the thiolase-like superfamily. Archaeal HMG-CoA synthase family. As to quaternary structure, interacts with acetoacetyl-CoA thiolase that catalyzes the precedent step in the pathway and with a DUF35 protein. The acetoacetyl-CoA thiolase/HMG-CoA synthase complex channels the intermediate via a fused CoA-binding site, which allows for efficient coupling of the endergonic thiolase reaction with the exergonic HMGCS reaction.

It catalyses the reaction acetoacetyl-CoA + acetyl-CoA + H2O = (3S)-3-hydroxy-3-methylglutaryl-CoA + CoA + H(+). It functions in the pathway metabolic intermediate biosynthesis; (R)-mevalonate biosynthesis; (R)-mevalonate from acetyl-CoA: step 2/3. In terms of biological role, catalyzes the condensation of acetyl-CoA with acetoacetyl-CoA to form 3-hydroxy-3-methylglutaryl-CoA (HMG-CoA). Functions in the mevalonate (MVA) pathway leading to isopentenyl diphosphate (IPP), a key precursor for the biosynthesis of isoprenoid compounds that are building blocks of archaeal membrane lipids. The chain is Hydroxymethylglutaryl-CoA synthase from Pyrococcus furiosus (strain ATCC 43587 / DSM 3638 / JCM 8422 / Vc1).